A 266-amino-acid chain; its full sequence is Phosphate import ATP-binding protein PstB 2 (266 aa).

Positions 13-252 (LEAQGVNVYY…GPTEEIFQNP (240 aa)) constitute an ABC transporter domain. 45-52 (GPSGCGKS) serves as a coordination point for ATP.

Belongs to the ABC transporter superfamily. Phosphate importer (TC 3.A.1.7) family. The complex is composed of two ATP-binding proteins (PstB), two transmembrane proteins (PstC and PstA) and a solute-binding protein (PstS).

It localises to the cell inner membrane. It catalyses the reaction phosphate(out) + ATP + H2O = ADP + 2 phosphate(in) + H(+). Its function is as follows. Part of the ABC transporter complex PstSACB involved in phosphate import. Responsible for energy coupling to the transport system. The polypeptide is Phosphate import ATP-binding protein PstB 2 (Synechocystis sp. (strain ATCC 27184 / PCC 6803 / Kazusa)).